The primary structure comprises 663 residues: COBRA-like protein 9 (663 aa).

Positions 1–23 (MGVLLPIFFGVLLLFTVTPPSMS) are cleaved as a signal peptide. Residues Asn-63, Asn-111, Asn-121, Asn-169, Asn-203, Asn-326, Asn-355, Asn-397, Asn-409, Asn-429, Asn-470, Asn-550, and Asn-561 are each glycosylated (N-linked (GlcNAc...) asparagine). Residue Ser-638 is the site of GPI-anchor amidated serine attachment. A propeptide spans 639-663 (GGRRNGAITVLSFITFYVAAFMVLL) (removed in mature form).

The protein belongs to the COBRA family. As to expression, expressed only in flowers.

It localises to the cell membrane. The sequence is that of COBRA-like protein 9 (COBL9) from Arabidopsis thaliana (Mouse-ear cress).